Consider the following 292-residue polypeptide: MNSVTTSTIGRLAFGVSRLSAVTNVAGAVRHASTHPTTAIPKPTTAVLKTSPLAEETAVELKSPSRLQLKSEPGNKGNPKGHGDRIWAFHHIEQGQVIYSTKPVISHQHLIRQQPFTGKNLVPRKIRKDYWRPLAMIELAGKDQGAVGRSVYQKLREFKKRHELDWANEAEEGRKLMHKSKRERGQELNDQKPNSVADMAAVLAGAGKGNLMWQVSRLGSSSELVGEIKKASGAVEKGAVVDVKRQLRRATVYWTNEQDKFHAREWSDNVSHEVGIPGEAEKKRMPIRMSSE.

A disordered region spans residues 59-83 (VELKSPSRLQLKSEPGNKGNPKGHG).

Belongs to the mitochondrion-specific ribosomal protein mL67 family. In terms of assembly, component of the mitochondrial large ribosomal subunit (mt-LSU). Mature N.crassa 74S mitochondrial ribosomes consist of a small (37S) and a large (54S) subunit. The 37S small subunit contains a 16S ribosomal RNA (16S mt-rRNA) and 32 different proteins. The 54S large subunit contains a 23S rRNA (23S mt-rRNA) and 42 different proteins.

It localises to the mitochondrion. Functionally, component of the mitochondrial ribosome (mitoribosome), a dedicated translation machinery responsible for the synthesis of mitochondrial genome-encoded proteins, including at least some of the essential transmembrane subunits of the mitochondrial respiratory chain. The mitoribosomes are attached to the mitochondrial inner membrane and translation products are cotranslationally integrated into the membrane. mL67/MHR1 also has extraribosomal functions, being involved in regulation of mitochondrial DNA recombination, maintenance and repair, and generation of homoplasmic cells. mL67/MHR1 also acts as a transcription factor involved in regulation of RNA polymerase II-dependent transcription. This Neurospora crassa (strain ATCC 24698 / 74-OR23-1A / CBS 708.71 / DSM 1257 / FGSC 987) protein is Large ribosomal subunit protein mL67 (mhr1).